The following is a 305-amino-acid chain: Homoserine O-acetyltransferase (305 aa).

The active-site Acyl-thioester intermediate is the Cys142. The substrate site is built by Lys163 and Ser192. The active-site Proton acceptor is the His233. The active site involves Glu235. Arg247 contributes to the substrate binding site.

This sequence belongs to the MetA family.

Its subcellular location is the cytoplasm. It catalyses the reaction L-homoserine + acetyl-CoA = O-acetyl-L-homoserine + CoA. It participates in amino-acid biosynthesis; L-methionine biosynthesis via de novo pathway; O-acetyl-L-homoserine from L-homoserine: step 1/1. Its function is as follows. Transfers an acetyl group from acetyl-CoA to L-homoserine, forming acetyl-L-homoserine. This Methanomassiliicoccus intestinalis (strain Issoire-Mx1) protein is Homoserine O-acetyltransferase.